Consider the following 61-residue polypeptide: Small ribosomal subunit protein uS14 (61 aa).

The Zn(2+) site is built by Cys24, Cys27, Cys40, and Cys43.

This sequence belongs to the universal ribosomal protein uS14 family. Zinc-binding uS14 subfamily. As to quaternary structure, part of the 30S ribosomal subunit. Contacts proteins S3 and S10. Zn(2+) is required as a cofactor.

Functionally, binds 16S rRNA, required for the assembly of 30S particles and may also be responsible for determining the conformation of the 16S rRNA at the A site. The polypeptide is Small ribosomal subunit protein uS14 (Borrelia garinii subsp. bavariensis (strain ATCC BAA-2496 / DSM 23469 / PBi) (Borreliella bavariensis)).